We begin with the raw amino-acid sequence, 590 residues long: Putative sodium/calcium exchanger 6 (590 aa).

The N-terminal stretch at Met-1–Gly-19 is a signal peptide. 11 helical membrane-spanning segments follow: residues Ile-97 to Ala-117, Val-139 to Ala-159, Leu-173 to Phe-193, Ile-208 to Val-228, Ile-230 to Ser-250, Pro-368 to Cys-388, Pro-397 to Phe-417, Ile-440 to Val-460, Ala-499 to Ile-519, Tyr-535 to Ala-555, and Leu-568 to Val-588.

It belongs to the Ca(2+):cation antiporter (CaCA) (TC 2.A.19) family.

Its subcellular location is the membrane. This chain is Putative sodium/calcium exchanger 6 (ncx-6), found in Caenorhabditis elegans.